A 466-amino-acid chain; its full sequence is 3-isopropylmalate dehydratase large subunit (466 aa).

The [4Fe-4S] cluster site is built by Cys-347, Cys-407, and Cys-410.

The protein belongs to the aconitase/IPM isomerase family. LeuC type 1 subfamily. As to quaternary structure, heterodimer of LeuC and LeuD. [4Fe-4S] cluster is required as a cofactor.

The enzyme catalyses (2R,3S)-3-isopropylmalate = (2S)-2-isopropylmalate. It functions in the pathway amino-acid biosynthesis; L-leucine biosynthesis; L-leucine from 3-methyl-2-oxobutanoate: step 2/4. In terms of biological role, catalyzes the isomerization between 2-isopropylmalate and 3-isopropylmalate, via the formation of 2-isopropylmaleate. The polypeptide is 3-isopropylmalate dehydratase large subunit (Escherichia coli O127:H6 (strain E2348/69 / EPEC)).